Reading from the N-terminus, the 124-residue chain is Large ribosomal subunit protein bL12 (124 aa).

This sequence belongs to the bacterial ribosomal protein bL12 family. As to quaternary structure, homodimer. Part of the ribosomal stalk of the 50S ribosomal subunit. Forms a multimeric L10(L12)X complex, where L10 forms an elongated spine to which 2 to 4 L12 dimers bind in a sequential fashion. Binds GTP-bound translation factors.

Its function is as follows. Forms part of the ribosomal stalk which helps the ribosome interact with GTP-bound translation factors. Is thus essential for accurate translation. The chain is Large ribosomal subunit protein bL12 from Phocaeicola vulgatus (strain ATCC 8482 / DSM 1447 / JCM 5826 / CCUG 4940 / NBRC 14291 / NCTC 11154) (Bacteroides vulgatus).